We begin with the raw amino-acid sequence, 271 residues long: Homeobox protein pal-1 (271 aa).

Disordered stretches follow at residues 1-25, 100-135, and 178-202; these read MSVDVKSEFSENDSSSSSSSPTNVN, PPLSNGSSSSDSGMYPSPNDLTPFPSTSSGIGASSS, and GSAGKERRASSDTKSLPTGPGTNNV. Composition is skewed to low complexity over residues 100 to 117 and 125 to 135; these read PPLSNGSSSSDSGMYPSP and STSSGIGASSS. Polar residues predominate over residues 189-202; sequence DTKSLPTGPGTNNV. The homeobox DNA-binding region spans 207-266; the sequence is ADKYRMVYSDYQRLELEKEFHTSAFITSDRKSQLSTMLSLTERQIKIWFQNRRAKDRRDK.

It belongs to the Caudal homeobox family. As to quaternary structure, interacts with tir-1 and let-756.

It is found in the nucleus. Its subcellular location is the chromosome. The protein localises to the centromere. It localises to the kinetochore. Its function is as follows. Transcriptional activator. Interacts with promoter regions for tbx-8.9, tbx-9, elt-1, hnd-1, scrt-1, and vab-7 genes. Binds the sequence ATTTATGAC. Binds to the enhancer region of the hlh-1 gene promoter during embryonic body wall muscle development. Activates the gene for mab-5 in embryo development. Necessary for vab-7 expression in C blastomeres in the posterior of embryos. Required for posterior V6 neuroectoblast cell fate specification during postembryonic neurogenesis (patterning) which generates the characteristic ray lineage during male tail development. Binds to ced-3 promoter and activated expression which is crucial for tail-spike cell death. Has a role in E cell specification in endoderm development and body wall muscle development. This Caenorhabditis briggsae protein is Homeobox protein pal-1.